The primary structure comprises 197 residues: Phospholipid hydroperoxide glutathione peroxidase (197 aa).

The residue at position 40 (S40) is a Phosphoserine. Residue U73 is part of the active site. U73 is a non-standard amino acid (selenocysteine).

Belongs to the glutathione peroxidase family. As to quaternary structure, monomer. Has a tendency to form higher mass oligomers. Interacts with FUNDC1; this interaction promotes GPX4 recruitment into mitochondria through TOM/TIM complex where it is degraded by mitophagy. Expressed very intensively in the testis and weakly in lung, heart, and cerebellum.

The protein localises to the mitochondrion. It is found in the cytoplasm. It carries out the reaction a hydroperoxy polyunsaturated fatty acid + 2 glutathione = a hydroxy polyunsaturated fatty acid + glutathione disulfide + H2O. The enzyme catalyses 2 glutathione + H2O2 = glutathione disulfide + 2 H2O. The catalysed reaction is tert-butyl hydroperoxide + 2 glutathione = tert-butanol + glutathione disulfide + H2O. It catalyses the reaction cumene hydroperoxide + 2 glutathione = 2-phenylpropan-2-ol + glutathione disulfide + H2O. It carries out the reaction (9S)-hydroperoxy-(10E,12Z)-octadecadienoate + 2 glutathione = (9S)-hydroxy-(10E,12Z)-octadecadienoate + glutathione disulfide + H2O. The enzyme catalyses (13S)-hydroperoxy-(9Z,11E)-octadecadienoate + 2 glutathione = (13S)-hydroxy-(9Z,11E)-octadecadienoate + glutathione disulfide + H2O. The catalysed reaction is (5S)-hydroperoxy-(6E,8Z,11Z,14Z)-eicosatetraenoate + 2 glutathione = (5S)-hydroxy-(6E,8Z,11Z,14Z)-eicosatetraenoate + glutathione disulfide + H2O. It catalyses the reaction (12R)-hydroperoxy-(5Z,8Z,10E,14Z)-eicosatetraenoate + 2 glutathione = (12R)-hydroxy-(5Z,8Z,10E,14Z)-eicosatetraenoate + glutathione disulfide + H2O. It carries out the reaction (12S)-hydroperoxy-(5Z,8Z,10E,14Z)-eicosatetraenoate + 2 glutathione = (12S)-hydroxy-(5Z,8Z,10E,14Z)-eicosatetraenoate + glutathione disulfide + H2O. The enzyme catalyses (15S)-hydroperoxy-(5Z,8Z,11Z,13E)-eicosatetraenoate + 2 glutathione = (15S)-hydroxy-(5Z,8Z,11Z,13E)-eicosatetraenoate + glutathione disulfide + H2O. The catalysed reaction is (5S)-hydroperoxy-(6E,8Z,11Z,14Z,17Z)-eicosapentaenoate + 2 glutathione = (5S)-hydroxy-(6E,8Z,11Z,14Z,17Z)-eicosapentaenoate + glutathione disulfide + H2O. It catalyses the reaction (12S)-hydroperoxy-(5Z,8Z,10E,14Z,17Z)-eicosapentaenoate + 2 glutathione = (12S)-hydroxy-(5Z,8Z,10E,14Z,17Z)-eicosapentaenoate + glutathione disulfide + H2O. It carries out the reaction (15S)-hydroperoxy-(5Z,8Z,11Z,13E,17Z)-eicosapentaenoate + 2 glutathione = (15S)-hydroxy-(5Z,8Z,11Z,13E,17Z)-eicosapentaenoate + glutathione disulfide + H2O. The enzyme catalyses (15S)-hydroperoxy-(11Z,13E)-eicosadienoate + 2 glutathione = (15S)-hydroxy-(11Z,13E)-eicosadienoate + glutathione disulfide + H2O. The catalysed reaction is (17S)-hydroperoxy-(4Z,7Z,10Z,13Z,15E,19Z)-docosahexaenoate + 2 glutathione = (17S)-hydroxy-(4Z,7Z,10Z,13Z,15E,19Z)-docosahexaenoate + glutathione disulfide + H2O. It catalyses the reaction a hydroperoxy-1,2-diacyl-glycero-3-phosphocholine + 2 glutathione = a hydroxy-1,2-diacyl-glycero-3-phosphocholine + glutathione disulfide + H2O. In terms of biological role, essential antioxidant peroxidase that directly reduces phospholipid hydroperoxide even if they are incorporated in membranes and lipoproteins. Can also reduce fatty acid hydroperoxide, cholesterol hydroperoxide and thymine hydroperoxide. Plays a key role in protecting cells from oxidative damage by preventing membrane lipid peroxidation. Required to prevent cells from ferroptosis, a non-apoptotic cell death resulting from an iron-dependent accumulation of lipid reactive oxygen species. The presence of selenocysteine (Sec) versus Cys at the active site is essential for life: it provides resistance to overoxidation and prevents cells against ferroptosis. The presence of Sec at the active site is also essential for the survival of a specific type of parvalbumin-positive interneurons, thereby preventing against fatal epileptic seizures. May be required to protect cells from the toxicity of ingested lipid hydroperoxides. Required for normal sperm development and male fertility. Essential for maturation and survival of photoreceptor cells. Plays a role in a primary T-cell response to viral and parasitic infection by protecting T-cells from ferroptosis and by supporting T-cell expansion. Plays a role of glutathione peroxidase in platelets in the arachidonic acid metabolism. Reduces hydroperoxy ester lipids formed by a 15-lipoxygenase that may play a role as down-regulator of the cellular 15-lipoxygenase pathway. Can also reduce small soluble hydroperoxides such as H2O2, cumene hydroperoxide and tert-butyl hydroperoxide. The protein is Phospholipid hydroperoxide glutathione peroxidase of Macaca fuscata fuscata (Japanese macaque).